A 665-amino-acid polypeptide reads, in one-letter code: Mitochondrial Rho GTPase 1 (665 aa).

Residues 1–634 are Cytoplasmic-facing; the sequence is MTNDVIRIVV…NQDPEEETNT (634 aa). One can recognise a Miro 1 domain in the interval 3–177; that stretch reads NDVIRIVVCG…FYLCQKAVMH (175 aa). Residues 12-19, 61-67, and 119-122 each bind GTP; these read GDEGVGKS, DTQFSNS, and NVFD. EF-hand domains are found at residues 193-228 and 313-348; these read NAVA…CFGR and EGYR…TPGI. Ca(2+) contacts are provided by Asp-206, Asp-208, Asp-210, Tyr-212, Glu-217, Asp-326, Asp-328, Asp-330, and Glu-337. The 167-residue stretch at 452 to 618 folds into the Miro 2 domain; the sequence is RSVFNCFVLG…FIQLAEAAQQ (167 aa). GTP-binding positions include 461-468, 498-502, and 567-570; these read GSHMSGKT, EMTGG, and LKAD. A helical; Anchor for type IV membrane protein membrane pass occupies residues 635 to 655; it reads IMPFALAGGATVLLAAAVAWI. At 656-665 the chain is on the mitochondrial intermembrane side; it reads FKNVRVAGRE.

This sequence belongs to the mitochondrial Rho GTPase family.

The protein localises to the mitochondrion outer membrane. Mitochondrial GTPase involved in mitochondrial trafficking. Probably involved in control of anterograde transport of mitochondria and their subcellular distribution. The sequence is that of Mitochondrial Rho GTPase 1 (GEM1) from Yarrowia lipolytica (strain CLIB 122 / E 150) (Yeast).